Consider the following 37-residue polypeptide: Cytochrome b6-f complex subunit 5 (37 aa).

The chain crosses the membrane as a helical span at residues 5-25 (LLSGIVLGLIPITLAGLFVTA).

The protein belongs to the PetG family. In terms of assembly, the 4 large subunits of the cytochrome b6-f complex are cytochrome b6, subunit IV (17 kDa polypeptide, PetD), cytochrome f and the Rieske protein, while the 4 small subunits are PetG, PetL, PetM and PetN. The complex functions as a dimer.

The protein resides in the plastid. Its subcellular location is the chloroplast thylakoid membrane. In terms of biological role, component of the cytochrome b6-f complex, which mediates electron transfer between photosystem II (PSII) and photosystem I (PSI), cyclic electron flow around PSI, and state transitions. PetG is required for either the stability or assembly of the cytochrome b6-f complex. This Zygnema circumcarinatum (Green alga) protein is Cytochrome b6-f complex subunit 5.